Consider the following 429-residue polypeptide: Enolase (429 aa).

Q165 is a (2R)-2-phosphoglycerate binding site. E207 serves as the catalytic Proton donor. Mg(2+) contacts are provided by D244, E287, and D314. (2R)-2-phosphoglycerate is bound by residues K339, R368, S369, and K390. K339 serves as the catalytic Proton acceptor.

This sequence belongs to the enolase family. Mg(2+) serves as cofactor.

It is found in the cytoplasm. Its subcellular location is the secreted. It localises to the cell surface. It carries out the reaction (2R)-2-phosphoglycerate = phosphoenolpyruvate + H2O. It functions in the pathway carbohydrate degradation; glycolysis; pyruvate from D-glyceraldehyde 3-phosphate: step 4/5. In terms of biological role, catalyzes the reversible conversion of 2-phosphoglycerate (2-PG) into phosphoenolpyruvate (PEP). It is essential for the degradation of carbohydrates via glycolysis. This Roseiflexus sp. (strain RS-1) protein is Enolase.